The sequence spans 502 residues: Probable cytosol aminopeptidase (502 aa).

Residues Lys-265 and Asp-270 each coordinate Mn(2+). The active site involves Lys-277. Mn(2+)-binding residues include Asp-288, Asp-347, and Glu-349. The active site involves Arg-351.

It belongs to the peptidase M17 family. Requires Mn(2+) as cofactor.

It localises to the cytoplasm. The catalysed reaction is Release of an N-terminal amino acid, Xaa-|-Yaa-, in which Xaa is preferably Leu, but may be other amino acids including Pro although not Arg or Lys, and Yaa may be Pro. Amino acid amides and methyl esters are also readily hydrolyzed, but rates on arylamides are exceedingly low.. It carries out the reaction Release of an N-terminal amino acid, preferentially leucine, but not glutamic or aspartic acids.. Its function is as follows. Presumably involved in the processing and regular turnover of intracellular proteins. Catalyzes the removal of unsubstituted N-terminal amino acids from various peptides. This is Probable cytosol aminopeptidase from Rickettsia bellii (strain OSU 85-389).